Consider the following 872-residue polypeptide: Bifunctional heparan sulfate N-deacetylase/N-sulfotransferase 4 (872 aa).

Topologically, residues 1–13 (MNLILKFRRSFRT) are cytoplasmic. Residues 14–34 (LIVLLATFCLVSILISAYFLY) traverse the membrane as a helical; Signal-anchor for type II membrane protein segment. Residues 35 to 872 (SGYKQEMTLI…WLRQELQKVR (838 aa)) are Lumenal-facing. A heparan sulfate N-deacetylase 4 region spans residues 36–588 (GYKQEMTLIE…KRHKDIWSRE (553 aa)). N-linked (GlcNAc...) asparagine glycosylation is found at Asn226, Asn341, and Asn391. The tract at residues 589–872 (KTCDHLPKFL…WLRQELQKVR (284 aa)) is heparan sulfate N-sulfotransferase 4. Residue Lys604 is the For sulfotransferase activity of the active site. Position 604–608 (604–608 (KTGTT)) interacts with 3'-phosphoadenylyl sulfate. Asn657 carries an N-linked (GlcNAc...) asparagine glycan. Ser702 is a 3'-phosphoadenylyl sulfate binding site. Asn793 carries an N-linked (GlcNAc...) asparagine glycan. Cys808 and Cys818 are joined by a disulfide. 823-827 (KGRKY) is a 3'-phosphoadenylyl sulfate binding site.

The protein belongs to the sulfotransferase 1 family. NDST subfamily. In terms of assembly, monomer. Expressed at low level in brain and throughout embryogenesis. Not expressed in other tissues.

The protein resides in the golgi apparatus membrane. It carries out the reaction alpha-D-glucosaminyl-[heparan sulfate](n) + 3'-phosphoadenylyl sulfate = N-sulfo-alpha-D-glucosaminyl-[heparan sulfate](n) + adenosine 3',5'-bisphosphate + 2 H(+). Its pathway is glycan metabolism; heparan sulfate biosynthesis. It functions in the pathway glycan metabolism; heparin biosynthesis. Its function is as follows. Essential bifunctional enzyme that catalyzes both the N-deacetylation and the N-sulfation of glucosamine (GlcNAc) of the glycosaminoglycan in heparan sulfate. Modifies the GlcNAc-GlcA disaccharide repeating sugar backbone to make N-sulfated heparosan, a prerequisite substrate for later modifications in heparin biosynthesis. Has low deacetylase activity but high sulfotransferase activity. This Mus musculus (Mouse) protein is Bifunctional heparan sulfate N-deacetylase/N-sulfotransferase 4 (Ndst4).